A 1978-amino-acid chain; its full sequence is Sodium channel protein type 8 subunit alpha (1978 aa).

2 disordered regions span residues 1-20 (MAARVLAPPGPDSFKPFTPE) and 28-62 (RIAESKLKKPPKADGSHREDDEDSKPKPNSDLEAG). At 1–132 (MAARVLAPPG…RIAIKILIHS (132 aa)) the chain is on the cytoplasmic side. Residues 28-61 (RIAESKLKKPPKADGSHREDDEDSKPKPNSDLEA) show a composition bias toward basic and acidic residues. The stretch at 114–442 (ILSPFNLIRR…KAMLEQLKKQ (329 aa)) is one I repeat. Residues 133–151 (VFSMIIMCTILTNCVFMTF) form a helical membrane-spanning segment. Topologically, residues 152–158 (SNPPEWS) are extracellular. Residues 159–179 (KNVEYTFTGIYTFESLVKIIA) traverse the membrane as a helical segment. Residues 180 to 193 (RGFCIDGFTFLRDP) are Cytoplasmic-facing. A helical membrane pass occupies residues 194–211 (WNWLDFSVIMMAYVTEFV). The Extracellular segment spans residues 212 to 217 (DLGNVS). An N-linked (GlcNAc...) asparagine glycan is attached at Asn215. A helical membrane pass occupies residues 218-234 (ALRTFRVLRALKTISVI). Residues 235–253 (PGLKTIVGALIQSVKKLSD) lie on the Cytoplasmic side of the membrane. Residues 254–273 (VMILTVFCLSVFALIGLQLF) traverse the membrane as a helical segment. The Extracellular portion of the chain corresponds to 274–355 (MGNLRNKCVV…PNYGYTSFDT (82 aa)). Cys281 and Cys333 are oxidised to a cystine. 4 N-linked (GlcNAc...) asparagine glycosylation sites follow: Asn289, Asn295, Asn308, and Asn326. Residues 356-380 (FSWAFLALFRLMTQDYWENLYQLTL) constitute an intramembrane region (pore-forming). Glu373 is a Na(+) binding site. At 381-387 (RAAGKTY) the chain is on the extracellular side. A helical transmembrane segment spans residues 388 to 408 (MIFFVLVIFVGSFYLVNLILA). Residues 409–751 (VVAMAYEEQN…EIVNLIVMDP (343 aa)) are Cytoplasmic-facing. Disordered stretches follow at residues 446–530 (AQAA…KAFR) and 576–597 (DPGSENEFADDEHSTVEESEGR). Low complexity predominate over residues 473-486 (SPRSSSELSKLSSK). Residues 489-500 (KERRNRRKKRKQ) show a composition bias toward basic residues. Basic and acidic residues-rich tracts occupy residues 501-530 (KELSEGEEKGDPEKVFKSESEDGMRRKAFR) and 586-597 (DEHSTVEESEGR). Phosphoserine is present on residues Ser518 and Ser520. Residues 733–1005 (CHPYWIKLKE…QISVIRIKKG (273 aa)) form an II repeat. A helical membrane pass occupies residues 752-770 (FVDLAITICIVLNTLFMAM). Over 771–781 (EHHPMTPQFEH) the chain is Extracellular. The helical transmembrane segment at 782–801 (VLAVGNLVFTGIFTAEMFLK) threads the bilayer. Residues 802 to 815 (LIAMDPYYYFQEGW) are Cytoplasmic-facing. A helical membrane pass occupies residues 816-835 (NIFDGFIVSLSLMELGLADV). The Extracellular portion of the chain corresponds to 836-837 (EG). A helical transmembrane segment spans residues 838 to 855 (LSVLRSFRLLRVFKLAKS). At 856–871 (WPTLNMLIKIIGNSVG) the chain is on the cytoplasmic side. Residues 872-890 (ALGNLTLVLAIIVFIFAVV) traverse the membrane as a helical segment. The Extracellular portion of the chain corresponds to 891–919 (GMQLFGKSYKECVCKISQECKLPRWHMND). The cysteines at positions 904 and 910 are disulfide-linked. An intramembrane region (pore-forming) is located at residues 920–940 (FFHSFLIVFRVLCGEWIETMW). 2 residues coordinate Na(+): Glu934 and Glu937. The Extracellular segment spans residues 941 to 953 (DCMEVAGQAMCLI). Cys942 and Cys951 form a disulfide bridge. A helical transmembrane segment spans residues 954–974 (VFMMVMVIGNLVVLNLFLALL). The Cytoplasmic portion of the chain corresponds to 975–1197 (LSSFSADNLA…TCFLIVEHNW (223 aa)). A disordered region spans residues 1105 to 1146 (NLNTEDVSSESDPEGSKDKLDDTSSSEGSTIDIKPEVEEVPV). An III repeat occupies 1178–1493 (LGKSWWILRK…KKYYNAMKKL (316 aa)). Residues 1198–1215 (FETFIIFMILLSSGALAF) form a helical membrane-spanning segment. At 1216-1228 (EDIYIEQRKTIRT) the chain is on the extracellular side. Residues 1229–1247 (ILEYADKVFTYIFILEMLL) traverse the membrane as a helical segment. The Cytoplasmic segment spans residues 1248-1261 (KWTAYGFVKFFTNA). A helical transmembrane segment spans residues 1262–1280 (WCWLDFLIVAVSLVSLIAN). Residues 1281–1288 (ALGYSELG) lie on the Extracellular side of the membrane. A helical transmembrane segment spans residues 1289-1307 (AIKSLRTLRALRPLRALSR). Residues 1308 to 1324 (FEGMRVVVNALVGAIPS) are Cytoplasmic-facing. The helical transmembrane segment at 1325–1344 (IMNVLLVCLIFWLIFSIMGV) threads the bilayer. The Extracellular portion of the chain corresponds to 1345-1397 (NLFAGKYHYCFNETSEIRFEIDEVNNKTDCEKLMEGNNTEIRWKNVKINFDNV). A disulfide bond links Cys1354 and Cys1374. Residues Asn1356, Asn1370, and Asn1381 are each glycosylated (N-linked (GlcNAc...) asparagine). Positions 1398–1419 (GAGYLALLQVATFKGWMDIMYA) form an intramembrane region, pore-forming. The Extracellular portion of the chain corresponds to 1420–1436 (AVDSRKPDEQPDYEGNI). The chain crosses the membrane as a helical span at residues 1437–1458 (YMYIYFVIFIIFGSFFTLNLFI). Residues 1459 to 1521 (GVIIDNFNQQ…IVFDFVTQQA (63 aa)) are Cytoplasmic-facing. Phosphoserine; by PKC is present on Ser1495. One copy of the IV repeat lies at 1502-1799 (IPRPLNKIQG…WEKFDPDATQ (298 aa)). A helical membrane pass occupies residues 1522 to 1539 (FDIVIMMLICLNMVTMMV). Topologically, residues 1540 to 1550 (ETDTQSKQMEN) are extracellular. A helical transmembrane segment spans residues 1551–1569 (ILYWINLVFVIFFTCECVL). At 1570 to 1581 (KMFALRHYYFTI) the chain is on the cytoplasmic side. A helical transmembrane segment spans residues 1582–1599 (GWNIFDFVVVILSIVGMF). Residues 1600 to 1612 (LADIIEKYFVSPT) are Extracellular-facing. The chain crosses the membrane as a helical span at residues 1613 to 1629 (LFRVIRLARIGRILRLI). Over 1630–1648 (KGAKGIRTLLFALMMSLPA) the chain is Cytoplasmic. Residues 1649–1666 (LFNIGLLLFLVMFIFSIF) form a helical membrane-spanning segment. Topologically, residues 1667–1688 (GMSNFAYVKHEAGIDDMFNFET) are extracellular. Residues 1689 to 1711 (FGNSMICLFQITTSAGWDGLLLP) constitute an intramembrane region (pore-forming). The Extracellular segment spans residues 1712-1740 (ILNRPPDCSLDKEHPGSGFKGDCGNPSVG). An intrachain disulfide couples Cys1719 to Cys1734. A helical transmembrane segment spans residues 1741–1763 (IFFFVSYIIISFLIVVNMYIAII). The Cytoplasmic segment spans residues 1764-1978 (LENFSVATEE…RQKEVRESKC (215 aa)). Residues 1893 to 1922 (EEVSAVVLQRAYRGHLARRGFICRKITSNK) enclose the IQ domain. Residues 1924-1978 (ENGGTHREKKESTPSTASLPSYDSVTKPDKEKQQRAEEGRRERAKRQKEVRESKC) are disordered. Residues 1936–1947 (TPSTASLPSYDS) are compositionally biased toward polar residues. Residues 1949–1978 (TKPDKEKQQRAEEGRRERAKRQKEVRESKC) show a composition bias toward basic and acidic residues.

This sequence belongs to the sodium channel (TC 1.A.1.10) family. Nav1.6/SCN8A subfamily. As to quaternary structure, the voltage-sensitive sodium channel consists of an ion-conducting pore-forming alpha subunit regulated by one or more beta-1 (SCN1B), beta-2 (SCN2B), beta-3 (SCN3B) and/or beta-4 (SCN4B) subunits. Beta-1 (SCN1B) and beta-3 (SCN3B) are non-covalently associated with alpha, while beta-2 (SCN2B) and beta-4 (SCN4B) are covalently linked by disulfide bonds. Interacts with FGF13. Interacts with NEDD4 and NEDD4L. Interacts with FGF14, GBG3, GBB2 and SCN1B. Interacts with TMEM233. Interacts with the conotoxin GVIIJ. Interacts with the scorpion toxin BMK M1. Interacts with CALM1; the interaction modulates the inactivation rate of SCN8A. In terms of processing, may be ubiquitinated by NEDD4L; which would promote its endocytosis. Post-translationally, phosphorylation at Ser-1495 by PKC in a highly conserved cytoplasmic loop slows inactivation of the sodium channel and reduces peak sodium currents. In terms of tissue distribution, expressed in the hippocampus (at protein level). Expressed in brain, cerebellum and spinal cord. Expressed in non-neuronal tissues, such as monocytes/macrophages.

The protein localises to the cell membrane. The protein resides in the cell projection. Its subcellular location is the axon. It localises to the cytoplasmic vesicle. It is found in the podosome. It carries out the reaction Na(+)(in) = Na(+)(out). In terms of biological role, pore-forming subunit of a voltage-gated sodium channel complex assuming opened or closed conformations in response to the voltage difference across membranes and through which sodium ions selectively pass along their electrochemical gradient. Contributes to neuronal excitability by regulating action potential threshold and propagation. Its function is as follows. More specifically expressed in non-neuronal cells, could play a role in sodium release from intracellular compartments and participate in the control of podosomes formation and macrophages adhesion and movement. The chain is Sodium channel protein type 8 subunit alpha from Mus musculus (Mouse).